The primary structure comprises 607 residues: Terpenoid synthase 9 (607 aa).

The Mg(2+) site is built by Asp356, Asp360, Asn501, and Asp509. Residues 356–360 carry the DDXXD motif motif; that stretch reads DDTFD.

The protein belongs to the terpene synthase family. Tpsa subfamily. Requires Mg(2+) as cofactor. Mn(2+) serves as cofactor. Predominantly expressed in roots but also in stems, leaves and flowers.

It localises to the cytoplasm. Its pathway is secondary metabolite biosynthesis; terpenoid biosynthesis. Involved in terpene biosynthesis in roots. Possesses diterpene (C20) synthase activity in vitro. Does not seem to be involved in sesquiterpene (C15) biosynthesis. The sequence is that of Terpenoid synthase 9 from Arabidopsis thaliana (Mouse-ear cress).